We begin with the raw amino-acid sequence, 290 residues long: Arginine and glutamate-rich protein 1 (290 aa).

A compositionally biased stretch (polar residues) spans 1 to 10 (MGSRSRTPSP). Disordered regions lie at residues 1-137 (MGSR…AKEL), 193-216 (ERRREQIREEERRREEDEKQKREE), and 249-290 (MDEE…PGAL). The segment covering 12 to 28 (GKRRHHKSKHKKRSKSH) has biased composition (basic residues). Basic and acidic residues-rich tracts occupy residues 29-44 (HDHERPSTRTDRDKSS) and 53-76 (RERDRDRERDRHRSDRHTERDYRH). 2 positions are modified to phosphoserine: S77 and S79. The span at 88-99 (SSSSSDSQYSEQ) shows a compositional bias: low complexity. A coiled-coil region spans residues 111-269 (FKKLDEQNQM…QEKRVKEEQK (159 aa)). Basic and acidic residues predominate over residues 124-137 (RLAEMERQRRAKEL). The span at 249–269 (MDEERQRMRKEQEKRVKEEQK) shows a compositional bias: basic and acidic residues.

It belongs to the ARGLU1 family. Associates with the U1-snRNP complex; the interaction is enhanced by binding of Arglu1 to a stable intronic sequence RNA (sisRNA) produced from the Arglu1 gene by premature cleavage.

The protein localises to the nucleus. It localises to the nucleus speckle. In terms of biological role, post-transcriptional regulator of gene expression; modulates splicing and premature cleavage at cryptic polyadenylation sites of its own pre-mRNA through binding and regulation of the U1-snRNP complex. In Drosophila melanogaster (Fruit fly), this protein is Arginine and glutamate-rich protein 1.